We begin with the raw amino-acid sequence, 140 residues long: Small ribosomal subunit protein uS12m (140 aa).

A mitochondrion-targeting transit peptide spans 1–30 (MNFLRQSFGITKQLASQAIQCSYETAVRGM).

Belongs to the universal ribosomal protein uS12 family.

It is found in the mitochondrion. In Drosophila melanogaster (Fruit fly), this protein is Small ribosomal subunit protein uS12m (tko).